Reading from the N-terminus, the 250-residue chain is AA9 family lytic polysaccharide monooxygenase B (250 aa).

The first 21 residues, 1 to 21, serve as a signal peptide directing secretion; the sequence is MTLSKITSIAGLLASASLVAG. Cu(2+) is bound by residues H22 and H107. Residue H22 is modified to Methylhistidine. Cystine bridges form between C77/C199 and C118/C122. Residue N159 is glycosylated (N-linked (GlcNAc...) asparagine). 2 residues coordinate O2: H185 and Q194. Y196 serves as a coordination point for Cu(2+).

Belongs to the polysaccharide monooxygenase AA9 family. Cu(2+) serves as cofactor. In terms of processing, the catalytically essential N-terminal histidine His-22 is post-translationally modified by methylation to prevent protonation of the histidine side chain, and protect the critical active site of the enzyme from oxidative damage.

The protein localises to the secreted. The catalysed reaction is [(1-&gt;4)-beta-D-glucosyl]n+m + reduced acceptor + O2 = 4-dehydro-beta-D-glucosyl-[(1-&gt;4)-beta-D-glucosyl]n-1 + [(1-&gt;4)-beta-D-glucosyl]m + acceptor + H2O.. Functionally, lytic polysaccharide monooxygenase (LPMO) that depolymerizes crystalline and amorphous polysaccharides via the oxidation of scissile alpha- or beta-(1-4)-glycosidic bonds, yielding C1 and C4 oxidation products. Catalysis by LPMOs requires the reduction of the active-site copper from Cu(II) to Cu(I) by a reducing agent and H(2)O(2) or O(2) as a cosubstrate. Shows activity on phosphoric acid swollen cellulose, on NaOH pretreated soy spent flakes as well as on crystalline cellulose (Avicel). Does not have a positive effect on cel6A activity, but acts synergistically with endoglucanase egl7. The chain is AA9 family lytic polysaccharide monooxygenase B from Aspergillus fumigatus (strain ATCC MYA-4609 / CBS 101355 / FGSC A1100 / Af293) (Neosartorya fumigata).